The following is a 628-amino-acid chain: Propionate--CoA ligase (628 aa).

The protein belongs to the ATP-dependent AMP-binding enzyme family.

It carries out the reaction propanoate + ATP + CoA = propanoyl-CoA + AMP + diphosphate. Its pathway is organic acid metabolism; propanoate degradation. In terms of biological role, catalyzes the synthesis of propionyl-CoA from propionate and CoA. Also converts acetate to acetyl-CoA but with a lower specific activity. This chain is Propionate--CoA ligase (prpE), found in Salmonella typhimurium (strain LT2 / SGSC1412 / ATCC 700720).